The primary structure comprises 347 residues: Ribosomal RNA small subunit methyltransferase C (347 aa).

This sequence belongs to the methyltransferase superfamily. RsmC family. In terms of assembly, monomer.

The protein localises to the cytoplasm. It catalyses the reaction guanosine(1207) in 16S rRNA + S-adenosyl-L-methionine = N(2)-methylguanosine(1207) in 16S rRNA + S-adenosyl-L-homocysteine + H(+). In terms of biological role, specifically methylates the guanine in position 1207 of 16S rRNA in the 30S particle. The chain is Ribosomal RNA small subunit methyltransferase C from Shewanella baltica (strain OS195).